The primary structure comprises 438 residues: Phosphoribosylamine--glycine ligase (438 aa).

The 209-residue stretch at 108-316 (RTFMERNEIP…LLEVAEGIVD (209 aa)) folds into the ATP-grasp domain. Residue 135–194 (VDDFGRPVVVKPIGLTGGKGVKVVGYQLRDNEEAKSYAEELIRRDGRVLIEERTNGVEFT) coordinates ATP. Glutamine 274, glutamate 286, and asparagine 288 together coordinate Mg(2+). Positions 274, 286, and 288 each coordinate Mn(2+).

Belongs to the GARS family. Requires Mg(2+) as cofactor. Mn(2+) is required as a cofactor.

The catalysed reaction is 5-phospho-beta-D-ribosylamine + glycine + ATP = N(1)-(5-phospho-beta-D-ribosyl)glycinamide + ADP + phosphate + H(+). Its pathway is purine metabolism; IMP biosynthesis via de novo pathway; N(1)-(5-phospho-D-ribosyl)glycinamide from 5-phospho-alpha-D-ribose 1-diphosphate: step 2/2. The polypeptide is Phosphoribosylamine--glycine ligase (Thermococcus gammatolerans (strain DSM 15229 / JCM 11827 / EJ3)).